The primary structure comprises 387 residues: ERBB-3 BINDING PROTEIN 1 (387 aa).

Necessary for nucleolar localization stretches follow at residues 1 to 49 and 297 to 387; these read MSDD…IVDL and LLQP…PMEG. The RNA-binding stretch occupies residues 47–55; the sequence is VDLCEKGDA. The disordered stretch occupies residues 337 to 387; the sequence is LQPTKTTENEPEIKAWLALPTKTKKKGGGKKKKGKKGDKVEEASQAEPMEG. The tract at residues 356–373 is interaction with RNA; that stretch reads PTKTKKKGGGKKKKGKKG. The segment covering 358–372 has biased composition (basic residues); it reads KTKKKGGGKKKKGKK. The short motif at 360–369 is the Nuclear localization signal element; sequence KKKGGGKKKK.

This sequence belongs to the peptidase M24 family. In terms of assembly, component of a ribonucleoprotein complex. As to expression, expressed during tuberisation and in roots, nodes, internodes, petioles, leaves, stolons, tubers and sprouts.

Its subcellular location is the nucleus. In terms of biological role, binds RNA. Associates with 28S, 18S and 5.8S mature rRNAs, several rRNA precursors and probably U3 small nucleolar RNA. May be involved in regulation of intermediate and late steps of rRNA processing. May be involved in ribosome assembly. Required for expression of cell cycle genes such as CYCD3-1, RNR2A and CDKB1-1. Promotes, in a dose- and auxin-dependent manner, organ growth by stimulating both cell proliferation and expansion, via the regulation of RBR1 levels. In Solanum tuberosum (Potato), this protein is ERBB-3 BINDING PROTEIN 1.